Consider the following 875-residue polypeptide: Phospholipase DDHD1 (875 aa).

Disordered regions lie at residues 1-30 (MNYP…LGSD), 101-153 (LRYY…GAAA), and 206-231 (RAQD…SVED). Residues Ser-8 and Ser-11 each carry the phosphoserine modification. Over residues 130–140 (SGGGGAAGGGP) the composition is skewed to gly residues. Low complexity predominate over residues 217-228 (GPASPAGPASSS). Residue Ser-540 is part of the active site. Residues 614 to 861 (LKFKVENFFC…ALFLLTFMYK (248 aa)) form the DDHD domain. Position 726 is a phosphoserine (Ser-726). The segment at 770 to 804 (RSSASQPSETSRDSIEDEKKPVASPPMTTVATQTL) is disordered. The segment covering 779–790 (TSRDSIEDEKKP) has biased composition (basic and acidic residues). Polar residues predominate over residues 795 to 804 (PMTTVATQTL).

It belongs to the PA-PLA1 family. As to quaternary structure, forms homooligomers and, to a much smaller extent, heterooligomers with DDHD2. Interacts with SEC23A and SEC24C. In terms of tissue distribution, expressed in mature testis.

It localises to the cytoplasm. The enzyme catalyses a 1,2-diacyl-sn-glycero-3-phosphate + H2O = a 2-acyl-sn-glycerol 3-phosphate + a fatty acid + H(+). It catalyses the reaction a 1,2-diacyl-sn-glycero-3-phospho-(1D-myo-inositol) + H2O = a 2-acyl-sn-glycero-3-phospho-D-myo-inositol + a fatty acid + H(+). It carries out the reaction 1-octadecanoyl-2-(5Z,8Z,11Z,14Z-eicosatetraenoyl)-sn-glycero-3-phospho-(1D-myo-inositol) + H2O = 2-(5Z,8Z,11Z,14Z-eicosatetraenoyl)-sn-glycero-3-phospho-(1D-myo-inositol) + octadecanoate + H(+). The catalysed reaction is a 1-acyl-2-(5Z,8Z,11Z,14Z-eicosatetraenoyl)-sn-glycero-3-phospho-(1D-myo-inositol) + H2O = 2-(5Z,8Z,11Z,14Z-eicosatetraenoyl)-sn-glycero-3-phospho-(1D-myo-inositol) + a fatty acid + H(+). The enzyme catalyses 1,2-dihexadecanoyl-sn-glycero-3-phospho-(1D-myo-inositol) + H2O = 2-hexadecanoyl-sn-glycero-3-phospho-(1D-myo-inositol) + hexadecanoate + H(+). It catalyses the reaction 1,2-di-(9Z-octadecenoyl)-sn-glycero-3-phosphate + H2O = 2-(9Z-octadecenoyl)-sn-glycero-3-phosphate + (9Z)-octadecenoate + H(+). It carries out the reaction a 1-acyl-2-(5Z,8Z,11Z,14Z)-eicosatetraenoyl-sn-glycero-3-phosphate + H2O = 2-(5Z,8Z,11Z,14Z-eicosatetraenoyl)-sn-glycero-3-phosphate + a fatty acid + H(+). The catalysed reaction is 1-hexadecanoyl-2-(9Z-octadecenoyl)-sn-glycero-3-phosphate + H2O = 2-(9Z-octadecenoyl)-sn-glycero-3-phosphate + hexadecanoate + H(+). The enzyme catalyses 1-hexadecanoyl-2-(9Z-octadecenoyl)-sn-glycero-3-phospho-L-serine + H2O = 2-(9Z-octadecenoyl)-sn-glycero-3-phospho-L-serine + hexadecanoate + H(+). It catalyses the reaction 1,2-di-(5Z,8Z,11Z,14Z)-eicosatetraenoyl-sn-glycero-3-phosphate + H2O = 2-(5Z,8Z,11Z,14Z-eicosatetraenoyl)-sn-glycero-3-phosphate + (5Z,8Z,11Z,14Z)-eicosatetraenoate + H(+). It carries out the reaction 1-octadecanoyl-2-(5Z,8Z,11Z,14Z-eicosatetraenoyl)-sn-glycero-3-phosphate + H2O = 2-(5Z,8Z,11Z,14Z-eicosatetraenoyl)-sn-glycero-3-phosphate + octadecanoate + H(+). The catalysed reaction is a 1,2-diacyl-sn-glycero-3-phosphocholine + H2O = a 2-acyl-sn-glycero-3-phosphocholine + a fatty acid + H(+). The enzyme catalyses a 1,2-diacyl-sn-glycero-3-phosphoethanolamine + H2O = a 2-acyl-sn-glycero-3-phosphoethanolamine + a fatty acid + H(+). It catalyses the reaction a 1,2-diacyl-sn-glycero-3-phospho-L-serine + H2O = a 2-acyl-sn-glycero-3-phospho-L-serine + a fatty acid + H(+). It carries out the reaction a 1,2-diacyl-sn-glycero-3-phospho-(1'-sn-glycerol) + H2O = 2-acyl-sn-glycero-3-phospho-(1'-sn-glycerol) + a fatty acid + H(+). The catalysed reaction is 1-hexadecanoyl-2-(9Z-octadecenoyl)-sn-glycero-3-phospho-(1'-sn-glycerol) + H2O = 2-(9Z-octadecenoyl)-sn-glycero-3-phospho-(1'-sn-glycerol) + hexadecanoate + H(+). The enzyme catalyses 1-acyl-2-(5Z,8Z,11Z,14Z-eicosatetraenoyl)-sn-glycero-3-phosphocholine + H2O = 2-(5Z,8Z,11Z,14Z)-eicosatetraenoyl-sn-glycero-3-phosphocholine + a fatty acid + H(+). It catalyses the reaction 1-acyl-2-(5Z,8Z,11Z,14Z)-eicosatetraenoyl-sn-glycero-3-phosphoethanolamine + H2O = 2-(5Z,8Z,11Z,14Z)-eicosatetraenoyl-sn-glycero-3-phosphoethanolamine + a fatty acid + H(+). It carries out the reaction 1-(9Z-octadecenoyl)-2-(7Z,10Z,13Z,16Z,19Z-docosapentaenoyl)-sn-glycero-3-phospho-1D-myo-inositol + H2O = 2-(7Z,10Z,13Z,16Z,19Z-docosapentaenoyl)-sn-glycero-3-phospho-1D-myo-inositol + (9Z)-octadecenoate + H(+). The catalysed reaction is 1-(9Z-octadecenoyl)-2-(5Z,8Z,11Z,14Z-eicosatetraenoyl)-sn-glycero-3-phospho-1D-myo-inositol + H2O = 2-(5Z,8Z,11Z,14Z-eicosatetraenoyl)-sn-glycero-3-phospho-(1D-myo-inositol) + (9Z)-octadecenoate + H(+). The enzyme catalyses 1,2-di-(9Z-octadecenoyl)-sn-glycero-3-phospho-1D-myo-inositol + H2O = 2-(9Z-octadecenoyl)-sn-glycero-3-phospho-1D-myo-inositol + (9Z)-octadecenoate + H(+). It catalyses the reaction 1-(9Z-octadecenoyl)-2-(8Z,11Z,14Z-eicosatrienoyl)-sn-glycero-3-phospho-1D-myo-inositol + H2O = 2-(8Z,11Z,14Z-eicosatrienoyl)-sn-glycero-3-phospho-1D-myo-inositol + (9Z)-octadecenoate + H(+). It carries out the reaction 1,2-di-(9Z-octadecenoyl)-sn-glycero-3-phosphocholine + H2O = (9Z-octadecenoyl)-sn-glycero-3-phosphocholine + (9Z)-octadecenoate + H(+). Its pathway is phospholipid metabolism; phosphatidylinositol metabolism. Phospholipase A1 (PLA1) that hydrolyzes ester bonds at the sn-1 position of glycerophospholipids producing a free fatty acid and a lysophospholipid. Prefers phosphatidate (1,2-diacyl-sn-glycero-3-phosphate, PA) as substrate in vitro, but can efficiently hydrolyze phosphatidylinositol (1,2-diacyl-sn-glycero-3-phospho-(1D-myo-inositol), PI), as well as a range of other glycerophospholipid substrates such as phosphatidylcholine (1,2-diacyl-sn-glycero-3-phosphocholine, PC), phosphatidylethanolamine (1,2-diacyl-sn-glycero-3-phosphoethanolamine, PE), phosphatidylserine (1,2-diacyl-sn-glycero-3-phospho-L-serine, PS) and phosphatidylglycerol (1,2-diacyl-sn-glycero-3-phospho-(1'-sn-glycerol), PG). Involved in the regulation of the endogenous content of polyunsaturated PI and PS lipids in the nervous system. Changes in these lipids extend to downstream metabolic products like PI phosphates PIP and PIP2, which play fundamental roles in cell biology. Regulates mitochondrial morphology. These dynamic changes may be due to PA hydrolysis at the mitochondrial surface. May play a regulatory role in spermatogenesis or sperm function. This is Phospholipase DDHD1 (DDHD1) from Bos taurus (Bovine).